We begin with the raw amino-acid sequence, 87 residues long: Small ribosomal subunit protein eS21 (87 aa).

It belongs to the eukaryotic ribosomal protein eS21 family. Component of the small ribosomal subunit. Mature ribosomes consist of a small (40S) and a large (60S) subunit. The 40S subunit contains about 33 different proteins and 1 molecule of RNA (18S). The 60S subunit contains about 49 different proteins and 3 molecules of RNA (25S, 5.8S and 5S).

It localises to the cytoplasm. Functionally, required for the processing of the 20S rRNA-precursor to mature 18S rRNA in a late step of the maturation of 40S ribosomal subunits. Has a physiological role leading to 18S rRNA stability. This chain is Small ribosomal subunit protein eS21 (RPS21), found in Kluyveromyces lactis (strain ATCC 8585 / CBS 2359 / DSM 70799 / NBRC 1267 / NRRL Y-1140 / WM37) (Yeast).